A 715-amino-acid polypeptide reads, in one-letter code: Discoidin, CUB and LCCL domain-containing protein 1 (715 aa).

The first 34 residues, M1 to A34, serve as a signal peptide directing secretion. The Extracellular segment spans residues E35 to V459. Disulfide bonds link C41-C68 and C94-C112. In terms of domain architecture, CUB spans C41 to S150. An N-linked (GlcNAc...) asparagine glycan is attached at N64. N124 carries N-linked (GlcNAc...) asparagine glycosylation. In terms of domain architecture, LCCL spans H152–F248. Cystine bridges form between C158–C174 and C178–C200. The region spanning F248–C412 is the F5/8 type C domain. N277 carries N-linked (GlcNAc...) asparagine glycosylation. A disordered region spans residues E278–E312. Over residues Q295–N307 the composition is skewed to polar residues. 3 N-linked (GlcNAc...) asparagine glycosylation sites follow: N351, N418, and N455. A helical transmembrane segment spans residues A460 to F480. Topologically, residues R481 to L715 are cytoplasmic. Residue S513 is modified to Phosphoserine. At T614 the chain carries Phosphothreonine. The tract at residues S619–C702 is disordered.

The protein localises to the membrane. This is Discoidin, CUB and LCCL domain-containing protein 1 (DCBLD1) from Homo sapiens (Human).